Here is an 832-residue protein sequence, read N- to C-terminus: MIAWRLPLCVLLVASVESHLGALGPKNVSQKDAEFERTYADDVNSELVNIYTFNHTVTRNRTEGVRVSVNVLNKQKGAPLLFVVRQKEAVVSFQVPLILRGLYQRKYLYQKVERTLCQPPTKNESEIQFFYVDVSTLSPVNTTYQLRVNRVDNFVLRTGELFTFNTTAAQPQYFKYEFPDGVDSVIVKVTSKKAFPCSVISIQDVLCPVYDLDNNVAFIGMYQTMTKKAAITVQRKDFPSNSFYVVVVVKTEDQACGGSLPFYPFVEDEPVDQGHRQKTLSVLVSQAVTSEAYVGGMLFCLGIFLSFYLLTVLLACWENWRQRKKTLLLAIDRACPESGHARVLADSFPGSAPYEGYNYGSFENGSGSTDGLVESAGSGDLSYSYQDRSFDAVGPRPRLDSMSSVEEDDYDTLTDIDSDKNVIRTKQYLCVADLARKDKRVLRKKYQIYFWNIATIAVFYALPVVQLVITYQTVVNVTGNQDICYYNFLCAHPLGNLSAFNNILSNLGYILLGLLFLLIILQREINHNRALLRNDLYALECGIPKHFGLFYAMGTALMMEGLLSACYHVCPNYTNFQFDTSFMYMIAGLCMLKLYQKRHPDINASAYSAYACLAIVIFFSVLGVVFGKGNTAFWIVFSVIHIISTLLLSTQLYYMGRWKLDSGIFRRILHVLYTDCIRQCSGPLYTDRMVLLVMGNIINWSLAAYGLIMRPNDFASYLLAIGICNLLLYFAFYIIMKLRSGERIKLIPLLCIVCTSVVWGFALFFFFQGLSTWQKTPAESREHNRDCILLDFFDDHDIWHFLSSIAMFGSFLVLLTLDDDLDTVQRDKIYVF.

A signal peptide spans 1-18 (MIAWRLPLCVLLVASVES). Residues 19–293 (HLGALGPKNV…VSQAVTSEAY (275 aa)) are Extracellular-facing. 6 N-linked (GlcNAc...) asparagine glycosylation sites follow: asparagine 27, asparagine 54, asparagine 60, asparagine 123, asparagine 141, and asparagine 165. The helical transmembrane segment at 294–314 (VGGMLFCLGIFLSFYLLTVLL) threads the bilayer. Residues 315–447 (ACWENWRQRK…DKRVLRKKYQ (133 aa)) lie on the Cytoplasmic side of the membrane. Phosphoserine occurs at positions 401, 403, and 404. Residues 448–468 (IYFWNIATIAVFYALPVVQLV) traverse the membrane as a helical segment. Residues 469–499 (ITYQTVVNVTGNQDICYYNFLCAHPLGNLSA) are Extracellular-facing. N-linked (GlcNAc...) asparagine glycans are attached at residues asparagine 476 and asparagine 496. A helical membrane pass occupies residues 500 to 520 (FNNILSNLGYILLGLLFLLII). Topologically, residues 521-546 (LQREINHNRALLRNDLYALECGIPKH) are cytoplasmic. Residues 547–567 (FGLFYAMGTALMMEGLLSACY) form a helical membrane-spanning segment. Residues 568-605 (HVCPNYTNFQFDTSFMYMIAGLCMLKLYQKRHPDINAS) are Extracellular-facing. Asparagine 572 and asparagine 603 each carry an N-linked (GlcNAc...) asparagine glycan. A helical transmembrane segment spans residues 606 to 626 (AYSAYACLAIVIFFSVLGVVF). The Cytoplasmic portion of the chain corresponds to 627-631 (GKGNT). Residues 632-652 (AFWIVFSVIHIISTLLLSTQL) traverse the membrane as a helical segment. Residues 653–688 (YYMGRWKLDSGIFRRILHVLYTDCIRQCSGPLYTDR) lie on the Extracellular side of the membrane. A helical membrane pass occupies residues 689-709 (MVLLVMGNIINWSLAAYGLIM). Residues 710 to 715 (RPNDFA) are Cytoplasmic-facing. A helical membrane pass occupies residues 716–736 (SYLLAIGICNLLLYFAFYIIM). Residues 737–746 (KLRSGERIKL) lie on the Extracellular side of the membrane. Residues 747 to 767 (IPLLCIVCTSVVWGFALFFFF) traverse the membrane as a helical segment. Residues 768–796 (QGLSTWQKTPAESREHNRDCILLDFFDDH) lie on the Cytoplasmic side of the membrane. Residues 797-817 (DIWHFLSSIAMFGSFLVLLTL) traverse the membrane as a helical segment. Over 818-832 (DDDLDTVQRDKIYVF) the chain is Extracellular.

This sequence belongs to the SID1 family. In terms of assembly, interacts with adapter protein complex 1 (AP-1) and AP-2, but not AP-3 and AP-4. Interacts with LAMP2. Post-translationally, glycosylated. As to expression, widely expressed, including in the liver, brain and kidney (at protein level).

The protein localises to the lysosome membrane. Its subcellular location is the cell membrane. Its function is as follows. Mediates the translocation of RNA and DNA across the lysosomal membrane during RNA and DNA autophagy (RDA), a process in which RNA and DNA is directly imported into lysosomes in an ATP-dependent manner, and degraded. Involved in the uptake of single-stranded oligonucleotides by living cells, a process called gymnosis. In vitro, mediates the uptake of linear DNA more efficiently than that of circular DNA, but exhibits similar uptake efficacy toward RNA and DNA. Binds long double-stranded RNA (dsRNA) (500 - 700 base pairs), but not dsRNA shorter than 100 bp. This chain is SID1 transmembrane family member 2 (Sidt2), found in Mus musculus (Mouse).